A 170-amino-acid chain; its full sequence is Large ribosomal subunit protein uL10 (170 aa).

The protein belongs to the universal ribosomal protein uL10 family. In terms of assembly, part of the ribosomal stalk of the 50S ribosomal subunit. The N-terminus interacts with L11 and the large rRNA to form the base of the stalk. The C-terminus forms an elongated spine to which L12 dimers bind in a sequential fashion forming a multimeric L10(L12)X complex.

Functionally, forms part of the ribosomal stalk, playing a central role in the interaction of the ribosome with GTP-bound translation factors. The sequence is that of Large ribosomal subunit protein uL10 from Fusobacterium nucleatum subsp. nucleatum (strain ATCC 25586 / DSM 15643 / BCRC 10681 / CIP 101130 / JCM 8532 / KCTC 2640 / LMG 13131 / VPI 4355).